A 342-amino-acid polypeptide reads, in one-letter code: MTPVNVALIRDTKWLTLEVCREFQRGTCSRADAECRFAHPPRVCHVENGRVVACFDSLKGRCTRENCKYLHPPPHLKSQLEVNGRNNLIQQKTAAAMFAQHMQLMLQNAQMSSLASFPMNPSLAANPAMAFNPYMTHPGMGLVPAELLPNGPVLISGNPPLALPGVPGPKPIRTDRLEVCREFQRGNCTRGESECRYAHPTDVSMIEVTDNSVTICMDYIKGRCSREKCKYFHPPPHLQAKLRAAHHQMNHSAANAMALPHGALQLIPKRSALDKANGATPVFNPSVFHCQQALANMQIPQQAFIPTVPMMHGATPSTVSTATPPASNVPYVPTTTGNQLKY.

4 consecutive C3H1-type zinc fingers follow at residues 14–42, 48–74, 174–202, and 210–236; these read WLTL…HPPR, NGRV…HPPP, TDRL…HPTD, and DNSV…HPPP. Low complexity predominate over residues 316–326; that stretch reads PSTVSTATPPA. The segment at 316–342 is disordered; the sequence is PSTVSTATPPASNVPYVPTTTGNQLKY. Over residues 333-342 the composition is skewed to polar residues; it reads PTTTGNQLKY.

It belongs to the muscleblind family.

It is found in the nucleus. The protein localises to the cytoplasm. In terms of biological role, mediates pre-mRNA alternative splicing regulation. Acts either as activator or repressor of splicing on specific pre-mRNA targets. Inhibits cardiac troponin-T (TNNT2) pre-mRNA exon inclusion but induces insulin receptor (IR) pre-mRNA exon inclusion in muscle. Antagonizes the alternative splicing activity pattern of CELF proteins. Could inhibit terminal muscle differentiation, acting at approximately the time of myogenin induction. The chain is Muscleblind-like protein 3 (Mbnl3) from Mus musculus (Mouse).